Here is a 542-residue protein sequence, read N- to C-terminus: Chaperonin GroEL (542 aa).

Residues 29 to 32, lysine 50, 86 to 90, glycine 414, 477 to 479, and aspartate 493 contribute to the ATP site; these read TMGP, DGTTT, and NAA.

This sequence belongs to the chaperonin (HSP60) family. In terms of assembly, forms a cylinder of 14 subunits composed of two heptameric rings stacked back-to-back. Interacts with the co-chaperonin GroES.

It is found in the cytoplasm. It catalyses the reaction ATP + H2O + a folded polypeptide = ADP + phosphate + an unfolded polypeptide.. In terms of biological role, together with its co-chaperonin GroES, plays an essential role in assisting protein folding. The GroEL-GroES system forms a nano-cage that allows encapsulation of the non-native substrate proteins and provides a physical environment optimized to promote and accelerate protein folding. The sequence is that of Chaperonin GroEL from Sulfurovum sp. (strain NBC37-1).